Reading from the N-terminus, the 462-residue chain is 3beta-hydroxysteroid dehydrogenase/Delta(5)-Delta(4) isomerase 1 (462 aa).

Residues 51 to 56 (GGAGHL), Tyr-220, and Lys-224 each bind NAD(+). Lys-224 acts as the Proton donor in catalysis. 2 helical membrane passes run 321 to 341 (VGTFSFWTPLNIALGFSSSMI) and 428 to 448 (VAVLVLGTILIFVAVFSFTFW).

This sequence belongs to the 3-beta-HSD family. As to expression, expressed exclusively in the neuron-like XXX(L/R) cells through all four larval stages and becomes fainter in adults.

Its subcellular location is the membrane. It carries out the reaction a 3beta-hydroxy-Delta(5)-steroid + NAD(+) = a 3-oxo-Delta(5)-steroid + NADH + H(+). The enzyme catalyses cholesterol + NAD(+) = cholest-5-en-3-one + NADH + H(+). The catalysed reaction is a 3-oxo-Delta(5)-steroid = a 3-oxo-Delta(4)-steroid. It catalyses the reaction cholest-5-en-3-one = cholest-4-en-3-one. It participates in steroid hormone biosynthesis; dafachronic acid biosynthesis. Functionally, hydroxysteroid dehydrogenase involved in the biosynthesis of dafrachonic acids. Catalyzes the dehydrogenation of cholesterol or its derivatives and the isomerization of the double carbon bond on the sterol ring. Modifies sterols into a Delta(4)-3-keto-sterols such as cholest-4-en-3-one, precursor of Delta(4)-dafachronic acid. Contributes to the production of Delta(7)-dafachronic acid in the XXX cells. Dafachronic acids act as ligands and bind directly to the nuclear hormone receptor (NHR) daf-12 suppressing dauer formation and inducing reproductive growth. Acts in parallel to AKT-1 to promote reproductive development via DAF-16/FoxO and DAF-12. The protein is 3beta-hydroxysteroid dehydrogenase/Delta(5)-Delta(4) isomerase 1 of Caenorhabditis elegans.